Here is a 1470-residue protein sequence, read N- to C-terminus: Membrane-associated guanylate kinase, WW and PDZ domain-containing protein 3 (1470 aa).

The 91-residue stretch at 18–108 (CAVSWAGPPG…PIRLKTVKPG (91 aa)) folds into the PDZ 1 domain. Positions 18–108 (CAVSWAGPPG…PIRLKTVKPG (91 aa)) are interaction with ADRB1 and TGFA. Residues 116 to 290 (RHYLSLQFQK…RSMDFRNYMM (175 aa)) form the Guanylate kinase-like domain. 123–130 (FQKGSIDH) contributes to the ATP binding site. Residues 184-266 (TYDGNFYGTP…ETREMHSESS (83 aa)) form a disordered region. The segment covering 193–204 (PKPPAEPSPFQP) has biased composition (pro residues). Ser236 bears the Phosphoserine mark. The span at 238-247 (LPEEEEDEDK) shows a compositional bias: acidic residues. WW domains follow at residues 296–329 (EPLP…DPRL) and 342–375 (GELP…NPVE). Residues 413 to 495 (RASLKKSTMG…NQYVNLTLCR (83 aa)) enclose the PDZ 2 domain. The segment at 413 to 495 (RASLKKSTMG…NQYVNLTLCR (83 aa)) is interaction with PTEN. Positions 550-575 (LLSSDRLNGPSDSNEQRASLASSGSS) are disordered. A compositionally biased stretch (polar residues) spans 559 to 575 (PSDSNEQRASLASSGSS). A PDZ 3 domain is found at 581–657 (TIPLVKGPKG…GADVPLLILR (77 aa)). The residue at position 598 (Ser598) is a Phosphoserine. The tract at residues 665–700 (KTAKMKTDTKETSGSLETINEPTPQPMPFPPSIIRS) is disordered. Residues 676–686 (TSGSLETINEP) show a composition bias toward polar residues. Position 702 is a phosphoserine (Ser702). The region spanning 729–811 (DVFLRKQESG…NGHVLLTVRR (83 aa)) is the PDZ 4 domain. Positions 729–811 (DVFLRKQESG…NGHVLLTVRR (83 aa)) are interaction with ADGRB1. The segment at 818–847 (KQPEDESPQAFSQSGSPRLNRTELPTRSAP) is disordered. Residues 826–847 (QAFSQSGSPRLNRTELPTRSAP) are compositionally biased toward polar residues. A phosphoserine mark is found at Ser833 and Ser916. The 88-residue stretch at 852–939 (DVILQRKENE…TVTLTVVAEE (88 aa)) folds into the PDZ 5 domain. The tract at residues 852 to 939 (DVILQRKENE…TVTLTVVAEE (88 aa)) is interaction with LPAR2 and GRIN2B. The interval 939 to 976 (EEHHGPPSGTNSARQSPALQHRPMGQAQATHIPGDRTA) is disordered. Polar residues predominate over residues 946-956 (SGTNSARQSPA). The PDZ 6 domain maps to 1022–1104 (PVELERGPRG…KVLLLLRPGT (83 aa)). Disordered stretches follow at residues 1124 to 1146 (IYDE…ESHV) and 1167 to 1470 (DTVQ…DKQL). Polar residues predominate over residues 1175–1191 (TLNGSQPEMKYQSIQKN). Basic and acidic residues-rich tracts occupy residues 1193 to 1209 (SKKD…KNLL) and 1230 to 1263 (RHSE…KGEN). The segment covering 1285-1304 (SSSPRKQQKIGGNSLSNTEG) has biased composition (polar residues). Position 1321 is a phosphoserine (Ser1321). Basic and acidic residues-rich tracts occupy residues 1326-1340 (PEGK…KDLK), 1350-1361 (RSPEKRSSKVDE), 1377-1397 (VSEK…DKTG), and 1422-1431 (EVTDRGKERA).

It belongs to the MAGUK family. As to quaternary structure, interacts with ADRB1, ADGRB1, LPAR2/EDG4, FZD4, FZD7, GRIN2B, TGFA and VANGL2. Interacts with PTEN. Interacts with ADRB1, PTPRB and unidentified tyrosine phosphorylated proteins. Interacts with DLL1. Interacts with PRRG4 (via cytoplasmic domain).

The protein localises to the cell membrane. Its subcellular location is the cell junction. The protein resides in the tight junction. It is found in the nucleus. Its function is as follows. Acts as a scaffolding protein at cell-cell junctions, thereby regulating various cellular and signaling processes. Cooperates with PTEN to modulate the kinase activity of AKT1. Its interaction with PTPRB and tyrosine phosphorylated proteins suggests that it may link receptor tyrosine phosphatase with its substrates at the plasma membrane. In polarized epithelial cells, involved in efficient trafficking of TGFA to the cell surface. Regulates the ability of LPAR2 to activate ERK and RhoA pathways. Regulates the JNK signaling cascade via its interaction with FZD4 and VANGL2. This is Membrane-associated guanylate kinase, WW and PDZ domain-containing protein 3 (Magi3) from Rattus norvegicus (Rat).